The primary structure comprises 371 residues: Cytochrome b (371 aa).

4 consecutive transmembrane segments (helical) span residues 25-45 (FGSM…FLAI), 69-90 (WTMQ…YTHI), 105-125 (WLSG…GYVL), and 170-190 (FFAL…VHII). Heme b is bound by residues H75 and H89. Residues H174 and H188 each contribute to the heme b site. Position 193 (H193) interacts with a ubiquinone. A run of 4 helical transmembrane segments spans residues 218–238 (YKDM…MSFS), 280–300 (LGGT…PFTH), 312–332 (FTQL…WTAT), and 339–358 (FILI…IINP).

The protein belongs to the cytochrome b family. The cytochrome bc1 complex contains 3 respiratory subunits (MT-CYB, CYC1 and UQCRFS1), 2 core proteins (UQCRC1 and UQCRC2) and probably 6 low-molecular weight proteins. Requires heme b as cofactor.

It is found in the mitochondrion inner membrane. In terms of biological role, component of the ubiquinol-cytochrome c reductase complex (complex III or cytochrome b-c1 complex) that is part of the mitochondrial respiratory chain. The b-c1 complex mediates electron transfer from ubiquinol to cytochrome c. Contributes to the generation of a proton gradient across the mitochondrial membrane that is then used for ATP synthesis. This is Cytochrome b (MT-CYB) from Elapognathus coronatus (Western crowned snake).